The sequence spans 185 residues: Alkyl hydroperoxide reductase AhpD (185 aa).

Cys-131 acts as the Proton donor in catalysis. A disulfide bond links Cys-131 and Cys-134. Cys-134 serves as the catalytic Cysteine sulfenic acid (-SOH) intermediate.

It belongs to the AhpD family. In terms of assembly, homotrimer.

It catalyses the reaction N(6)-[(R)-dihydrolipoyl]-L-lysyl-[lipoyl-carrier protein] + a hydroperoxide = N(6)-[(R)-lipoyl]-L-lysyl-[lipoyl-carrier protein] + an alcohol + H2O. In terms of biological role, antioxidant protein with alkyl hydroperoxidase activity. Required for the reduction of the AhpC active site cysteine residues and for the regeneration of the AhpC enzyme activity. The sequence is that of Alkyl hydroperoxide reductase AhpD from Frankia alni (strain DSM 45986 / CECT 9034 / ACN14a).